A 93-amino-acid polypeptide reads, in one-letter code: Aspartyl/glutamyl-tRNA(Asn/Gln) amidotransferase subunit C (93 aa).

The protein belongs to the GatC family. As to quaternary structure, heterotrimer of A, B and C subunits.

The enzyme catalyses L-glutamyl-tRNA(Gln) + L-glutamine + ATP + H2O = L-glutaminyl-tRNA(Gln) + L-glutamate + ADP + phosphate + H(+). It catalyses the reaction L-aspartyl-tRNA(Asn) + L-glutamine + ATP + H2O = L-asparaginyl-tRNA(Asn) + L-glutamate + ADP + phosphate + 2 H(+). In terms of biological role, allows the formation of correctly charged Asn-tRNA(Asn) or Gln-tRNA(Gln) through the transamidation of misacylated Asp-tRNA(Asn) or Glu-tRNA(Gln) in organisms which lack either or both of asparaginyl-tRNA or glutaminyl-tRNA synthetases. The reaction takes place in the presence of glutamine and ATP through an activated phospho-Asp-tRNA(Asn) or phospho-Glu-tRNA(Gln). In Rubrobacter xylanophilus (strain DSM 9941 / JCM 11954 / NBRC 16129 / PRD-1), this protein is Aspartyl/glutamyl-tRNA(Asn/Gln) amidotransferase subunit C.